A 185-amino-acid polypeptide reads, in one-letter code: MMLIIGLGNPGKEYEHTRHNIGFIALENIAKQYETSFSVKKKFHCEIAESTNNGQKLIFVKPTTYMNLSGKSVIAVKTYYNIPLEKIFVIHDDIDLELGKIKFKTGGGNGGHNGLKSIDGIIENNYHRIRIGVGRPQNSQDVADYVLNNFSKTEYVIAEQAIDKITDNFNLILENKLEEFKSKMV.

Tyrosine 14 provides a ligand contact to tRNA. The active-site Proton acceptor is histidine 19. Positions 65, 67, and 113 each coordinate tRNA.

The protein belongs to the PTH family. In terms of assembly, monomer.

The protein resides in the cytoplasm. The catalysed reaction is an N-acyl-L-alpha-aminoacyl-tRNA + H2O = an N-acyl-L-amino acid + a tRNA + H(+). Its function is as follows. Hydrolyzes ribosome-free peptidyl-tRNAs (with 1 or more amino acids incorporated), which drop off the ribosome during protein synthesis, or as a result of ribosome stalling. In terms of biological role, catalyzes the release of premature peptidyl moieties from peptidyl-tRNA molecules trapped in stalled 50S ribosomal subunits, and thus maintains levels of free tRNAs and 50S ribosomes. The chain is Peptidyl-tRNA hydrolase from Rickettsia bellii (strain OSU 85-389).